The chain runs to 122 residues: Large ribosomal subunit protein uL14 (122 aa).

The protein belongs to the universal ribosomal protein uL14 family. As to quaternary structure, part of the 50S ribosomal subunit. Forms a cluster with proteins L3 and L19. In the 70S ribosome, L14 and L19 interact and together make contacts with the 16S rRNA in bridges B5 and B8.

In terms of biological role, binds to 23S rRNA. Forms part of two intersubunit bridges in the 70S ribosome. The protein is Large ribosomal subunit protein uL14 of Helicobacter hepaticus (strain ATCC 51449 / 3B1).